A 268-amino-acid chain; its full sequence is Putative ABC transporter ATP-binding protein MK0182 (268 aa).

The 229-residue stretch at 1 to 229 folds into the ABC transporter domain; that stretch reads MTHEYPDGTC…VDLIRESGLK (229 aa). 29–36 contributes to the ATP binding site; that stretch reads GPNGSGKT.

Belongs to the ABC transporter superfamily.

It is found in the cell membrane. Probably part of an ABC transporter complex. Responsible for energy coupling to the transport system. The chain is Putative ABC transporter ATP-binding protein MK0182 from Methanopyrus kandleri (strain AV19 / DSM 6324 / JCM 9639 / NBRC 100938).